Reading from the N-terminus, the 182-residue chain is Ribosome-recycling factor (182 aa).

This sequence belongs to the RRF family.

It localises to the cytoplasm. Functionally, responsible for the release of ribosomes from messenger RNA at the termination of protein biosynthesis. May increase the efficiency of translation by recycling ribosomes from one round of translation to another. The protein is Ribosome-recycling factor of Synechococcus sp. (strain WH7803).